We begin with the raw amino-acid sequence, 309 residues long: Putative S-adenosyl-L-methionine-dependent methyltransferase Mvan_0104 (309 aa).

S-adenosyl-L-methionine-binding positions include aspartate 134 and 163–164; that span reads DL.

Belongs to the UPF0677 family.

In terms of biological role, exhibits S-adenosyl-L-methionine-dependent methyltransferase activity. The protein is Putative S-adenosyl-L-methionine-dependent methyltransferase Mvan_0104 of Mycolicibacterium vanbaalenii (strain DSM 7251 / JCM 13017 / BCRC 16820 / KCTC 9966 / NRRL B-24157 / PYR-1) (Mycobacterium vanbaalenii).